The following is a 182-amino-acid chain: Keratin, type II cytoskeletal 60 kDa, component III (182 aa).

The IF rod domain occupies 1–63 (ERGELALKDA…KLLEGEECRL (63 aa)). The segment at 1–63 (ERGELALKDA…KLLEGEECRL (63 aa)) is coil 2. Residues 63–182 (LSGEGVGPVN…TSSSRKSFKS (120 aa)) are tail. The interval 157 to 182 (FGSGGGSSSSVKFVSTTSSSRKSFKS) is disordered. The segment covering 164 to 182 (SSSVKFVSTTSSSRKSFKS) has biased composition (low complexity).

This sequence belongs to the intermediate filament family. Heterotetramer of two type I and two type II keratins.

The polypeptide is Keratin, type II cytoskeletal 60 kDa, component III (Bos taurus (Bovine)).